Here is a 300-residue protein sequence, read N- to C-terminus: MEKTQETVQRILLEPYKYLLQLPGKQVRTKLSQAFNHWLKVPEDKLQIIIEVTEMLHNASLLIDDIEDNSKLRRGFPVAHSIYGIPSVINSANYVYFLGLEKVLTLNHPDAVKLFTRQLLELHQGQGLDIYWRDNYTCPTEEEYKAMVLQKTGGLFGLAVGLMQLFSDYKEDLKPLLDTLGLFFQIRDDYANLHSKEYSENKSFCEDLTEGKFSFPTIHAIWSRPESTQVQNILRQRTENIDIKKYCVHYLENVGSFEYTRNTLKELESKAYKQIDARGGNPELVALIKHLSKMFKEENE.

At Met1 the chain carries N-acetylmethionine. Residues Lys25, Arg28, and His57 each coordinate isopentenyl diphosphate. Residues Asp64 and Asp68 each coordinate Mg(2+). Arg73 serves as a coordination point for dimethylallyl diphosphate. Arg74 is a binding site for isopentenyl diphosphate. Positions 151, 152, 185, 202, and 212 each coordinate dimethylallyl diphosphate.

Belongs to the FPP/GGPP synthase family. Homohexamer; trimer of homodimers. The cofactor is Mg(2+).

The protein resides in the cytoplasm. The protein localises to the perinuclear region. It localises to the myofibril. Its subcellular location is the sarcomere. It is found in the z line. It catalyses the reaction isopentenyl diphosphate + dimethylallyl diphosphate = (2E)-geranyl diphosphate + diphosphate. The enzyme catalyses isopentenyl diphosphate + (2E)-geranyl diphosphate = (2E,6E)-farnesyl diphosphate + diphosphate. It carries out the reaction isopentenyl diphosphate + (2E,6E)-farnesyl diphosphate = (2E,6E,10E)-geranylgeranyl diphosphate + diphosphate. It functions in the pathway isoprenoid biosynthesis; farnesyl diphosphate biosynthesis; farnesyl diphosphate from geranyl diphosphate and isopentenyl diphosphate: step 1/1. The protein operates within isoprenoid biosynthesis; geranyl diphosphate biosynthesis; geranyl diphosphate from dimethylallyl diphosphate and isopentenyl diphosphate: step 1/1. It participates in isoprenoid biosynthesis; geranylgeranyl diphosphate biosynthesis; geranylgeranyl diphosphate from farnesyl diphosphate and isopentenyl diphosphate: step 1/1. Functionally, catalyzes the trans-addition of the three molecules of IPP onto DMAPP to form geranylgeranyl pyrophosphate, an important precursor of carotenoids and geranylated proteins. This is Geranylgeranyl pyrophosphate synthase (GGPS1) from Bos taurus (Bovine).